The primary structure comprises 276 residues: Bis(5'-nucleosyl)-tetraphosphatase, symmetrical (276 aa).

Belongs to the Ap4A hydrolase family.

It catalyses the reaction P(1),P(4)-bis(5'-adenosyl) tetraphosphate + H2O = 2 ADP + 2 H(+). Its function is as follows. Hydrolyzes diadenosine 5',5'''-P1,P4-tetraphosphate to yield ADP. The chain is Bis(5'-nucleosyl)-tetraphosphatase, symmetrical from Mannheimia succiniciproducens (strain KCTC 0769BP / MBEL55E).